A 99-amino-acid polypeptide reads, in one-letter code: Large ribosomal subunit protein uL23 (99 aa).

It belongs to the universal ribosomal protein uL23 family. Part of the 50S ribosomal subunit. Contacts protein L29, and trigger factor when it is bound to the ribosome.

Functionally, one of the early assembly proteins it binds 23S rRNA. One of the proteins that surrounds the polypeptide exit tunnel on the outside of the ribosome. Forms the main docking site for trigger factor binding to the ribosome. The protein is Large ribosomal subunit protein uL23 of Francisella tularensis subsp. holarctica (strain OSU18).